The primary structure comprises 176 residues: ATP synthase subunit delta (176 aa).

Belongs to the ATPase delta chain family. As to quaternary structure, F-type ATPases have 2 components, F(1) - the catalytic core - and F(0) - the membrane proton channel. F(1) has five subunits: alpha(3), beta(3), gamma(1), delta(1), epsilon(1). F(0) has three main subunits: a(1), b(2) and c(10-14). The alpha and beta chains form an alternating ring which encloses part of the gamma chain. F(1) is attached to F(0) by a central stalk formed by the gamma and epsilon chains, while a peripheral stalk is formed by the delta and b chains.

Its subcellular location is the cell inner membrane. In terms of biological role, f(1)F(0) ATP synthase produces ATP from ADP in the presence of a proton or sodium gradient. F-type ATPases consist of two structural domains, F(1) containing the extramembraneous catalytic core and F(0) containing the membrane proton channel, linked together by a central stalk and a peripheral stalk. During catalysis, ATP synthesis in the catalytic domain of F(1) is coupled via a rotary mechanism of the central stalk subunits to proton translocation. Its function is as follows. This protein is part of the stalk that links CF(0) to CF(1). It either transmits conformational changes from CF(0) to CF(1) or is implicated in proton conduction. This chain is ATP synthase subunit delta, found in Actinobacillus succinogenes (strain ATCC 55618 / DSM 22257 / CCUG 43843 / 130Z).